The following is a 150-amino-acid chain: Ribosome maturation factor RimP (150 aa).

The protein belongs to the RimP family.

Its subcellular location is the cytoplasm. Functionally, required for maturation of 30S ribosomal subunits. The polypeptide is Ribosome maturation factor RimP (Acidithiobacillus ferrooxidans (strain ATCC 23270 / DSM 14882 / CIP 104768 / NCIMB 8455) (Ferrobacillus ferrooxidans (strain ATCC 23270))).